The primary structure comprises 208 residues: Outer-membrane lipoprotein carrier protein (208 aa).

A signal peptide spans 1–21 (MKRTATLLVVALILALNTAQA).

Belongs to the LolA family. As to quaternary structure, monomer.

It is found in the periplasm. Functionally, participates in the translocation of lipoproteins from the inner membrane to the outer membrane. Only forms a complex with a lipoprotein if the residue after the N-terminal Cys is not an aspartate (The Asp acts as a targeting signal to indicate that the lipoprotein should stay in the inner membrane). The chain is Outer-membrane lipoprotein carrier protein from Halorhodospira halophila (strain DSM 244 / SL1) (Ectothiorhodospira halophila (strain DSM 244 / SL1)).